A 230-amino-acid chain; its full sequence is Ribosome-recycling factor, mitochondrial (230 aa).

The N-terminal 24 residues, 1 to 24 (MILTTARLNCRPVTVPRLFNRSFS), are a transit peptide targeting the mitochondrion.

Belongs to the RRF family.

The protein localises to the mitochondrion. Its function is as follows. Necessary for protein synthesis in mitochondria. Functions as a ribosome recycling factor in mitochondria. The protein is Ribosome-recycling factor, mitochondrial (RRF1) of Saccharomyces cerevisiae (strain ATCC 204508 / S288c) (Baker's yeast).